Reading from the N-terminus, the 696-residue chain is Macrolide export ATP-binding/permease protein MacB (696 aa).

The ABC transporter domain maps to 6–244 (IELKNIERYH…KPQNKRTFID (239 aa)). 42–49 (GASGSGKS) contacts ATP. Positions 254 to 287 (HNTEKLNRPNEKNNIDNDNKENNNGYNRNDNSFL) are disordered. The span at 255–274 (NTEKLNRPNEKNNIDNDNKE) shows a compositional bias: basic and acidic residues. Over residues 275 to 284 (NNNGYNRNDN) the composition is skewed to low complexity. The next 4 membrane-spanning stretches (helical) occupy residues 324 to 344 (FLTMLGIIIGIIAVVFVIALG), 576 to 596 (IAFISLIVGGIGIMNIMLVSV), 626 to 646 (MVSLIGGCIGVGCALLFGGLF), and 659 to 679 (LSSFLIAFLCSSMIGIVFGYF).

Belongs to the ABC transporter superfamily. Macrolide exporter (TC 3.A.1.122) family. In terms of assembly, homodimer. Part of the tripartite efflux system MacAB-TolC, which is composed of an inner membrane transporter, MacB, a periplasmic membrane fusion protein, MacA, and an outer membrane component, TolC. The complex forms a large protein conduit and can translocate molecules across both the inner and outer membranes. Interacts with MacA.

The protein localises to the cell inner membrane. Functionally, part of the tripartite efflux system MacAB-TolC. MacB is a non-canonical ABC transporter that contains transmembrane domains (TMD), which form a pore in the inner membrane, and an ATP-binding domain (NBD), which is responsible for energy generation. Confers resistance against macrolides. This chain is Macrolide export ATP-binding/permease protein MacB, found in Haemophilus ducreyi (strain 35000HP / ATCC 700724).